Here is a 905-residue protein sequence, read N- to C-terminus: MKKLSSAAIREQFLRFFEERGHVRVPSSSLIPGNDPTLLFTNSGMVQFKDTFLGLEQRPYTRATTVQKCLRVSGKHNDLEEVGPSPRHHTFFEMLGNFSFGDYFKSEAIPMAWELLTKVFELPVERLWFTVFEGDDEVPPDDEAAQLWVAAGADPDRVLRFGRKDNFWVMADTGPCGPCSEITIYIGDDLRAMSAQGVNSDDPNYVEIWNNVFMQFERSTMQPLHRPSVDTGMGLERMAMVMQGVHSTYETDLFIPLIERQLALLGADESTYRARVAPYRAVADHSRAVAFLIADGVLPGNTGRSYVLRRILRRAVYQGRTVGFEKPFLAEIVAAVIEQMGAVYPELRERADFILETVDLEERQFLRTLSGGMSILNSVIERVRASGSTVIPGDDAFTLKDTYGFPLDLTQKIAAEHGLTVDEAGYERRMEEQRDRGRRAAQFKRAAEAEVWAGIDLPPTRFTGYAAVSGSGVVQAIVVAGDQVAEASAGQQVQIALDSTPFYAESGGQVGDTGVLIGPRGRVRVEDVQRPVPGVIVHYGVVESGSVMLHDPVDAHVDSGRRAAIMRNHTATHLLHRALRDVLGEHAAQAGSLVAPDRLRFDFTHTRPLTPEQLHEIERRVNAWIRADTPVVWQELSYQAAIEAGAIALFGEKYGDVVRMVTIGCVNGHDAPSPAALAERELAGFPMCSRELCGGTHVGRSGEIGLFRIISESSVAAGVRRIEALTGPEAEAWVDAQIATLQAVAARVGAPQTQLVERVEALIAELKQRQRALDELTARMARSNLEGLLASVQSVGDIRFLAAQVEAPNAARLREMGDWLRDKLGSGVVVLATVFDGKAQILAMATPDLAGKRIHAGNLVKALAPIVGGSGGGRPDMAQAGGRDSAKIPQALEHVAAVIAAQAGV.

Positions 569, 573, 693, and 697 each coordinate Zn(2+).

It belongs to the class-II aminoacyl-tRNA synthetase family. The cofactor is Zn(2+).

It is found in the cytoplasm. It catalyses the reaction tRNA(Ala) + L-alanine + ATP = L-alanyl-tRNA(Ala) + AMP + diphosphate. In terms of biological role, catalyzes the attachment of alanine to tRNA(Ala) in a two-step reaction: alanine is first activated by ATP to form Ala-AMP and then transferred to the acceptor end of tRNA(Ala). Also edits incorrectly charged Ser-tRNA(Ala) and Gly-tRNA(Ala) via its editing domain. This is Alanine--tRNA ligase from Roseiflexus sp. (strain RS-1).